The sequence spans 393 residues: Aspartate aminotransferase (393 aa).

Gly-38, Trp-124, and Asn-174 together coordinate L-aspartate. Lys-237 is modified (N6-(pyridoxal phosphate)lysine).

It belongs to the class-I pyridoxal-phosphate-dependent aminotransferase family. As to quaternary structure, homodimer. Pyridoxal 5'-phosphate serves as cofactor.

Its subcellular location is the cytoplasm. The enzyme catalyses L-aspartate + 2-oxoglutarate = oxaloacetate + L-glutamate. In Bacillus subtilis (strain 168), this protein is Aspartate aminotransferase (aspB).